The sequence spans 503 residues: Probable cytosol aminopeptidase (503 aa).

Residues Lys-268 and Asp-273 each contribute to the Mn(2+) site. The active site involves Lys-280. Asp-291, Asp-350, and Glu-352 together coordinate Mn(2+). Arg-354 is an active-site residue.

The protein belongs to the peptidase M17 family. It depends on Mn(2+) as a cofactor.

It is found in the cytoplasm. It carries out the reaction Release of an N-terminal amino acid, Xaa-|-Yaa-, in which Xaa is preferably Leu, but may be other amino acids including Pro although not Arg or Lys, and Yaa may be Pro. Amino acid amides and methyl esters are also readily hydrolyzed, but rates on arylamides are exceedingly low.. The catalysed reaction is Release of an N-terminal amino acid, preferentially leucine, but not glutamic or aspartic acids.. Functionally, presumably involved in the processing and regular turnover of intracellular proteins. Catalyzes the removal of unsubstituted N-terminal amino acids from various peptides. This Methylobacterium radiotolerans (strain ATCC 27329 / DSM 1819 / JCM 2831 / NBRC 15690 / NCIMB 10815 / 0-1) protein is Probable cytosol aminopeptidase.